Consider the following 263-residue polypeptide: 4-hydroxy-tetrahydrodipicolinate reductase (263 aa).

Residues 8–13 (GACGRM), Asp-34, 99–101 (GTT), and 125–128 (SPNY) each bind NAD(+). His-157 functions as the Proton donor/acceptor in the catalytic mechanism. His-158 is a (S)-2,3,4,5-tetrahydrodipicolinate binding site. The Proton donor role is filled by Lys-161. 167 to 168 (GT) provides a ligand contact to (S)-2,3,4,5-tetrahydrodipicolinate.

This sequence belongs to the DapB family.

The protein localises to the cytoplasm. The enzyme catalyses (S)-2,3,4,5-tetrahydrodipicolinate + NAD(+) + H2O = (2S,4S)-4-hydroxy-2,3,4,5-tetrahydrodipicolinate + NADH + H(+). It catalyses the reaction (S)-2,3,4,5-tetrahydrodipicolinate + NADP(+) + H2O = (2S,4S)-4-hydroxy-2,3,4,5-tetrahydrodipicolinate + NADPH + H(+). It functions in the pathway amino-acid biosynthesis; L-lysine biosynthesis via DAP pathway; (S)-tetrahydrodipicolinate from L-aspartate: step 4/4. Catalyzes the conversion of 4-hydroxy-tetrahydrodipicolinate (HTPA) to tetrahydrodipicolinate. The sequence is that of 4-hydroxy-tetrahydrodipicolinate reductase from Methanosarcina mazei (strain ATCC BAA-159 / DSM 3647 / Goe1 / Go1 / JCM 11833 / OCM 88) (Methanosarcina frisia).